A 467-amino-acid polypeptide reads, in one-letter code: Probable glutamate decarboxylase gamma (467 aa).

K278 carries the N6-(pyridoxal phosphate)lysine modification.

It belongs to the group II decarboxylase family. Pyridoxal 5'-phosphate is required as a cofactor.

The catalysed reaction is L-glutamate + H(+) = 4-aminobutanoate + CO2. The protein is Probable glutamate decarboxylase gamma of Listeria monocytogenes serovar 1/2a (strain ATCC BAA-679 / EGD-e).